Reading from the N-terminus, the 442-residue chain is Myb family transcription factor PHL13 (442 aa).

An HTH myb-type domain is found at 235-295; it reads MTSKQRMRWT…HLQKYRTARY (61 aa). The segment at residues 266–291 is a DNA-binding region (H-T-H motif); sequence PKAVLKLINSPGLTVYHVKSHLQKYR. The coiled coil stretch occupies residues 329–349; the sequence is TEALRLQMKVQKQLHEQLEIQ. Positions 342 to 347 match the LHEQLE motif; sequence LHEQLE. A compositionally biased stretch (basic and acidic residues) spans 370–380; that stretch reads QQKMQENKKDS. Residues 370–442 form a disordered region; it reads QQKMQENKKD…TSNRKRVRED (73 aa). Positions 395 to 434 are enriched in polar residues; that stretch reads SPNLSQPFLHKATNSEPSITQKLQNGSSTMDQSESTSGTS.

The protein belongs to the MYB-CC family.

The protein resides in the nucleus. This is Myb family transcription factor PHL13 from Arabidopsis thaliana (Mouse-ear cress).